The primary structure comprises 264 residues: MKTYLQLLEHILQHGVEKSDRTGTGTLSVFGYQMRFDLAQGFPLVTTKKLHTRSIVHELLWFLRGDTNISYLKENGVTIWDEWADNNGDLGPVYGKQWRSWPTADGRTIDQLSEVVQQIKSNPDSRRLIVSAWNVGELDKMALMPCHALFQFYVANNKLSCQLYQRSADVFLGVPFNIASYSLLTHMVAQQCNLDVAEFIWTGGDCHLYLNHLEQAQIQLTREPLPLPSLAIKRKPASLFDYAYEDFEFLNYQSHPAIKAPIAV.

Arg-21 is a binding site for dUMP. His-51 is a (6R)-5,10-methylene-5,6,7,8-tetrahydrofolate binding site. 126 to 127 contacts dUMP; that stretch reads RR. Cys-146 functions as the Nucleophile in the catalytic mechanism. DUMP is bound by residues 166–169, Asn-177, and 207–209; these read RSAD and HLY. (6R)-5,10-methylene-5,6,7,8-tetrahydrofolate is bound at residue Asp-169. (6R)-5,10-methylene-5,6,7,8-tetrahydrofolate is bound at residue Ala-263.

It belongs to the thymidylate synthase family. Bacterial-type ThyA subfamily. Homodimer.

Its subcellular location is the cytoplasm. It catalyses the reaction dUMP + (6R)-5,10-methylene-5,6,7,8-tetrahydrofolate = 7,8-dihydrofolate + dTMP. Its pathway is pyrimidine metabolism; dTTP biosynthesis. Functionally, catalyzes the reductive methylation of 2'-deoxyuridine-5'-monophosphate (dUMP) to 2'-deoxythymidine-5'-monophosphate (dTMP) while utilizing 5,10-methylenetetrahydrofolate (mTHF) as the methyl donor and reductant in the reaction, yielding dihydrofolate (DHF) as a by-product. This enzymatic reaction provides an intracellular de novo source of dTMP, an essential precursor for DNA biosynthesis. This chain is Thymidylate synthase, found in Legionella pneumophila subsp. pneumophila (strain Philadelphia 1 / ATCC 33152 / DSM 7513).